The sequence spans 626 residues: Nuclear RNA export factor 1 (626 aa).

The segment covering 1 to 16 has biased composition (basic and acidic residues); the sequence is MADEGKSYSEHDDERV. A disordered region spans residues 1 to 85; the sequence is MADEGKSYSE…TTRPNRRGDA (85 aa). A2 carries the N-acetylalanine modification. The segment at 2–60 is minor non-specific RNA-binding; that stretch reads ADEGKSYSEHDDERVNFPQRKKKGRGPFRWKYGEGNRRSGRGGSGIRSSRLEEDDGDVA. An RNA-binding (RBD) region spans residues 2–118; sequence ADEGKSYSEH…GTSQDGTSKN (117 aa). The tract at residues 2–198 is interaction with ALYREF/THOC4 and LUZP4; the sequence is ADEGKSYSEH…IIINPSAPPH (197 aa). The residue at position 9 (S9) is a Phosphoserine. Over residues 20 to 29 the composition is skewed to basic residues; sequence QRKKKGRGPF. Residue R42 is modified to Asymmetric dimethylarginine; alternate. At R42 the chain carries Omega-N-methylarginine; alternate. Residues 61–118 form a major non-specific RNA-binding region; that stretch reads MSDAQDGPRVRYNPYTTRPNRRGDAWHDRDRIHVTVRRDRAPPERGGAGTSQDGTSKN. The tract at residues 61–118 is RNA binding; sequence MSDAQDGPRVRYNPYTTRPNRRGDAWHDRDRIHVTVRRDRAPPERGGAGTSQDGTSKN. The Nuclear localization signal motif lies at 67 to 100; the sequence is GPRVRYNPYTTRPNRRGDAWHDRDRIHVTVRRDR. Residues 83–110 carry the Nuclear export signal motif; that stretch reads GDAWHDRDRIHVTVRRDRAPPERGGAGT. Positions 119-198 constitute an RRM domain; that stretch reads WFKITIPYGR…IIINPSAPPH (80 aa). Y126 is modified (3'-nitrotyrosine). 4 LRR repeats span residues 266–291, 292–315, 316–350, and 351–378; these read ELLS…QKVP, NLKI…IKGL, KLEE…AIRE, and RFPK…TTLP. The 151-residue stretch at 393 to 543 folds into the NTF2 domain; that stretch reads LVLHFLQQYY…LCIVNDELFV (151 aa). Residues 572-626 form the TAP-C domain; it reads PEQQEMLQAFSTQSGMNLEWSQKCLQDNNWDYTRSAQAFTHLKAKGEIPEVAFMK.

This sequence belongs to the NXF family. Heterodimer (via NTF2 domain) with NXT1. The formation of NXF1-NXT1 heterodimers is required for the NXF1-mediated nuclear mRNA export. Forms a complex with RANBP2/NUP358, NXT1 and RANGAP1. Associates with the exon junction complex (EJC) and with the transcription/export (TREX) complex. Found in a mRNA complex with UPF3A and UPF3B. Found in a post-splicing complex with RBM8A, UPF1, UPF2, UPF3A, UPF3B and RNPS1. Interacts (via N-terminus) with DHX9 (via N-terminus); this interaction is direct and negatively regulates NXF1-mediated nuclear export of constitutive transport element (CTE)-containing cellular mRNAs. Interacts with ALYREF/THOC4. Interacts with FYTTD1/UIF. Interacts with EIF4A3. Interacts with NUPL2. Interacts with THOC5. Interacts with CHTOP. Interacts with FRG1 (via N-terminus). Interacts with LUZP4. Interacts with FMR1; the interaction occurs in a mRNA-dependent and polyribosomes-independent manner in the nucleus. Interacts with CPSF6 (via N-terminus); this interaction is direct. Interacts with RBM15. Interacts with RBM15B. Interacts with MCM3AP; this interaction is not mediated by RNA.

Its subcellular location is the nucleus. It is found in the nucleoplasm. The protein resides in the nucleus speckle. The protein localises to the cytoplasm. Functionally, involved in the nuclear export of mRNA species bearing retroviral constitutive transport elements (CTE) and in the export of mRNA from the nucleus to the cytoplasm (TAP/NFX1 pathway). The NXF1-NXT1 heterodimer is involved in the export of HSP70 mRNA in conjunction with ALYREF/THOC4 and THOC5 components of the TREX complex. ALYREF/THOC4-bound mRNA is thought to be transferred to the NXF1-NXT1 heterodimer for export. Also involved in nuclear export of m6A-containing mRNAs: interaction between SRSF3 and YTHDC1 facilitates m6A-containing mRNA-binding to both SRSF3 and NXF1, promoting mRNA nuclear export. This Pongo abelii (Sumatran orangutan) protein is Nuclear RNA export factor 1 (NXF1).